The chain runs to 568 residues: Zinc finger protein 648 (568 aa).

Basic and acidic residues predominate over residues 1–11 (MAQVDSQDRWG). A disordered region spans residues 1 to 106 (MAQVDSQDRW…MSGKASWSRD (106 aa)). 10 C2H2-type zinc fingers span residues 279–301 (YACE…RRLH), 307–329 (YQCS…IRTH), 335–358 (YPCP…RNMH), 364–386 (FPCS…QRTH), 392–414 (FRCP…QRVH), 420–442 (FPCP…QTLH), 448–470 (FKCA…QRIH), 476–498 (FPCT…QQIH), 504–526 (FLCA…IRMH), and 532–554 (YQCE…RAKH). The interval 548 to 568 (QRHRAKHGTCKKEPIPSSSDE) is disordered.

Belongs to the krueppel C2H2-type zinc-finger protein family.

Its subcellular location is the nucleus. Its function is as follows. May be involved in transcriptional regulation. In Homo sapiens (Human), this protein is Zinc finger protein 648 (ZNF648).